Here is a 300-residue protein sequence, read N- to C-terminus: Protein TRACHEARY ELEMENT DIFFERENTIATION-RELATED 7A (300 aa).

The disordered stretch occupies residues 1–181; it reads MASPLSQSVF…HIIPPPPPSP (181 aa). The Extracellular segment spans residues 1–187; it reads MASPLSQSVF…PPSPSNHSTT (187 aa). Positions 12-181 are enriched in pro residues; it reads HFPPPSPAAT…HIIPPPPPSP (170 aa). The N-linked (GlcNAc...) asparagine glycan is linked to asparagine 183. A helical membrane pass occupies residues 188–208; that stretch reads IVVIFVSCGGVFFLAFAMAAL. The Cytoplasmic segment spans residues 209–300; it reads WCFLKKKKKK…SSFGHHYLHG (92 aa).

In terms of tissue distribution, accumulates in cells differentiating into tracheary element (TE) which undergo secondary cell wall (SCW) formation.

The protein resides in the cell membrane. It is found in the secreted. The protein localises to the cell wall. Functionally, involved in the secondary cell wall (SCW) formation of vessel elements (e.g. protoxylem and metaxylem), thus promoting tracheary element (TE) differentiation. This chain is Protein TRACHEARY ELEMENT DIFFERENTIATION-RELATED 7A, found in Zinnia elegans (Garden zinnia).